The chain runs to 626 residues: Chaperone protein DnaK (626 aa).

At Thr-197 the chain carries Phosphothreonine; by autocatalysis. Low complexity predominate over residues 595-614; it reads QNMAQQQQAQGGAQQQNQNK. The disordered stretch occupies residues 595-626; sequence QNMAQQQQAQGGAQQQNQNKGGDDDVIDAEVE.

Belongs to the heat shock protein 70 family.

In terms of biological role, acts as a chaperone. The sequence is that of Chaperone protein DnaK from Nautilia profundicola (strain ATCC BAA-1463 / DSM 18972 / AmH).